A 164-amino-acid chain; its full sequence is 6,7-dimethyl-8-ribityllumazine synthase 1 (164 aa).

5-amino-6-(D-ribitylamino)uracil-binding positions include phenylalanine 27, 58–60 (SLE), and 87–89 (TII). Position 92–93 (92–93 (DT)) interacts with (2S)-2-hydroxy-3-oxobutyl phosphate. The active-site Proton donor is histidine 95. Position 120 (asparagine 120) interacts with 5-amino-6-(D-ribitylamino)uracil. Residue arginine 134 coordinates (2S)-2-hydroxy-3-oxobutyl phosphate.

The protein belongs to the DMRL synthase family. Homopentamer.

It carries out the reaction (2S)-2-hydroxy-3-oxobutyl phosphate + 5-amino-6-(D-ribitylamino)uracil = 6,7-dimethyl-8-(1-D-ribityl)lumazine + phosphate + 2 H2O + H(+). It participates in cofactor biosynthesis; riboflavin biosynthesis; riboflavin from 2-hydroxy-3-oxobutyl phosphate and 5-amino-6-(D-ribitylamino)uracil: step 1/2. Functionally, catalyzes the formation of 6,7-dimethyl-8-ribityllumazine by condensation of 5-amino-6-(D-ribitylamino)uracil with 3,4-dihydroxy-2-butanone 4-phosphate. This is the penultimate step in the biosynthesis of riboflavin. The polypeptide is 6,7-dimethyl-8-ribityllumazine synthase 1 (ribH1) (Mesorhizobium japonicum (strain LMG 29417 / CECT 9101 / MAFF 303099) (Mesorhizobium loti (strain MAFF 303099))).